A 141-amino-acid chain; its full sequence is Brain ribonuclease (141 aa).

The segment at 1–25 (KETAAAKFRRQHMDSGSSSSSNSNY) is disordered. Substrate-binding residues include K7 and R10. H12 serves as the catalytic Proton acceptor. Over residues 15–24 (SGSSSSSNSN) the composition is skewed to low complexity. Disulfide bonds link C26/C84, C40/C95, C58/C110, and C65/C72. 41-45 (KPVNT) contributes to the substrate binding site. An N-linked (GlcNAc...) asparagine glycan is attached at N62. Positions 66 and 85 each coordinate substrate. The Proton donor role is filled by H119. A glycan (O-linked (GalNAc...) threonine) is linked at T129.

This sequence belongs to the pancreatic ribonuclease family.

It is found in the secreted. This Giraffa camelopardalis (Giraffe) protein is Brain ribonuclease (BRN).